The primary structure comprises 1140 residues: Eukaryotic translation initiation factor 3 subunit A (1140 aa).

The 183-residue stretch at 319 to 501 (LQRMAAHVLL…NSIYFGTDLT (183 aa)) folds into the PCI domain. 2 stretches are compositionally biased toward basic and acidic residues: residues 588-623 (QNNA…EERE) and 829-899 (AAEE…RGGD). Disordered regions lie at residues 588–630 (QNNA…HQNE) and 829–1140 (AAEE…VKRR). S908 is subject to Phosphoserine. 4 stretches are compositionally biased toward basic and acidic residues: residues 920–976 (ERND…EPDS), 990–1051 (SRDD…EPQR), 1059–1086 (DAPR…RGDQ), and 1109–1130 (TREE…KAGD).

This sequence belongs to the eIF-3 subunit A family. Component of the eukaryotic translation initiation factor 3 (eIF-3) complex. The eIF-3 complex interacts with pix.

It is found in the cytoplasm. RNA-binding component of the eukaryotic translation initiation factor 3 (eIF-3) complex, which is involved in protein synthesis of a specialized repertoire of mRNAs and, together with other initiation factors, stimulates binding of mRNA and methionyl-tRNAi to the 40S ribosome. The eIF-3 complex specifically targets and initiates translation of a subset of mRNAs involved in cell proliferation. This is Eukaryotic translation initiation factor 3 subunit A from Drosophila melanogaster (Fruit fly).